The following is a 373-amino-acid chain: XK-related protein 9 (373 aa).

The next 8 membrane-spanning stretches (helical) occupy residues 8 to 28 (FMMSVLGIIIYVTDLIVDIWV), 38 to 58 (YVFSALALSFMLFGTLVAQCF), 166 to 186 (AAIMVSCCAISWSTVDYQVAL), 203 to 223 (ITYLFYKLFTLLSWMLSVVLL), 224 to 244 (LFLNVKIALFLLLFLWLLGII), 256 to 276 (CISMEFLYRIVVGFILIFTFF), 295 to 315 (VLGTLGILTVFWVCPLTIFNP), and 318 to 338 (FIPISITIVLTLLLGILFLIV).

It belongs to the XK family. Undergoes proteolytic processing by caspase-3 (CASP3), caspase-6 (CASP6) and caspase-7 (CASP7) to generate the XK-related protein 9, processed form, leading to its activation.

It is found in the cell membrane. The enzyme catalyses a 1,2-diacyl-sn-glycero-3-phospho-L-serine(in) = a 1,2-diacyl-sn-glycero-3-phospho-L-serine(out). With respect to regulation, activated upon caspase cleavage to generate the XK-related protein 9, processed form. Does not act prior the onset of apoptosis. Its function is as follows. Phospholipid scramblase that promotes phosphatidylserine exposure on apoptotic cell surface. Phosphatidylserine is a specific marker only present at the surface of apoptotic cells and acts as a specific signal for engulfment. The protein is XK-related protein 9 of Homo sapiens (Human).